Consider the following 365-residue polypeptide: c-di-GMP synthase (365 aa).

It belongs to the CD-NTase family. E subfamily.

It catalyses the reaction 2 GTP = 3',3'-c-di-GMP + 2 diphosphate. Cyclic nucleotide synthase (second messenger synthase) of a CBASS antivirus system. CBASS (cyclic oligonucleotide-based antiphage signaling system) provides immunity against bacteriophage. The CD-NTase protein synthesizes cyclic nucleotides in response to infection; these serve as specific second messenger signals. The signals activate a diverse range of effectors, leading to bacterial cell death and thus abortive phage infection. A type I-D(GG) CBASS system. Its function is as follows. Cyclic dinucleotide synthase that catalyzes the synthesis of c-di-GMP, has no activity with other NTP substrates. The chain is c-di-GMP synthase from Flavobacteriaceae sp. genome_bin_11.